Here is a 352-residue protein sequence, read N- to C-terminus: DNA primase (352 aa).

2 disordered regions span residues 145 to 172 and 318 to 352; these read DPKL…REDG and YRQQ…GMSL. Basic and acidic residues predominate over residues 318–332; sequence YRQQWEKLEGREPVR.

Functions as a primase with respect to replication at the (vegetative) origin of replication of pTF-FC2. The sequence is that of DNA primase (repB) from Acidithiobacillus ferrooxidans (Thiobacillus ferrooxidans).